The chain runs to 345 residues: Adenylosuccinate synthetase (345 aa).

GTP-binding positions include 18 to 24 (GDEGKGK) and 48 to 50 (GHT). Catalysis depends on Asp-19, which acts as the Proton acceptor. Mg(2+)-binding residues include Asp-19 and Gly-48. IMP contacts are provided by residues 19-22 (DEGK), 46-49 (NAGH), Thr-133, Arg-147, Gln-185, Thr-200, and Arg-262. His-49 (proton donor) is an active-site residue. 258-264 (TVTGRRR) contributes to the substrate binding site. GTP contacts are provided by residues Arg-264, 290 to 292 (GLD), and 330 to 332 (STG).

The protein belongs to the adenylosuccinate synthetase family. As to quaternary structure, homodimer. Mg(2+) serves as cofactor.

It localises to the cytoplasm. The enzyme catalyses IMP + L-aspartate + GTP = N(6)-(1,2-dicarboxyethyl)-AMP + GDP + phosphate + 2 H(+). The protein operates within purine metabolism; AMP biosynthesis via de novo pathway; AMP from IMP: step 1/2. Its function is as follows. Plays an important role in the de novo pathway of purine nucleotide biosynthesis. Catalyzes the first committed step in the biosynthesis of AMP from IMP. The sequence is that of Adenylosuccinate synthetase from Methanocaldococcus jannaschii (strain ATCC 43067 / DSM 2661 / JAL-1 / JCM 10045 / NBRC 100440) (Methanococcus jannaschii).